The following is a 79-amino-acid chain: Sulfur carrier protein TusA (79 aa).

C17 (cysteine persulfide intermediate) is an active-site residue.

It belongs to the sulfur carrier protein TusA family.

The protein localises to the cytoplasm. Its function is as follows. Sulfur carrier protein which probably makes part of a sulfur-relay system. This is Sulfur carrier protein TusA from Actinobacillus succinogenes (strain ATCC 55618 / DSM 22257 / CCUG 43843 / 130Z).